We begin with the raw amino-acid sequence, 255 residues long: Tryptophan synthase alpha chain (255 aa).

Active-site proton acceptor residues include Glu49 and Asp60.

This sequence belongs to the TrpA family. Tetramer of two alpha and two beta chains.

The enzyme catalyses (1S,2R)-1-C-(indol-3-yl)glycerol 3-phosphate + L-serine = D-glyceraldehyde 3-phosphate + L-tryptophan + H2O. Its pathway is amino-acid biosynthesis; L-tryptophan biosynthesis; L-tryptophan from chorismate: step 5/5. Functionally, the alpha subunit is responsible for the aldol cleavage of indoleglycerol phosphate to indole and glyceraldehyde 3-phosphate. The protein is Tryptophan synthase alpha chain of Desulfovibrio desulfuricans (strain ATCC 27774 / DSM 6949 / MB).